The following is a 101-amino-acid chain: opdI (101 aa).

The helical transmembrane segment at 30–49 (GGMGGALKIVFLGMMTYFIA) threads the bilayer. Residues 56 to 101 (SQHPPTDFNAPVQSVPQRAQRPSDTRLQGPVLLASNHPSGDSASPE) are disordered. Polar residues-rich tracts occupy residues 66–81 (PVQS…SDTR) and 91–101 (NHPSGDSASPE).

It localises to the membrane. Its function is as follows. Part of the gene cluster that mediates the biosynthesis of oxopyrrolidines, polyketide-amino acid hybrid compounds with feature structures of tetramic acid. Does not seem to play a role in oxopyrrolidines A and B biosynthesis. In Penicillium oxalicum (strain 114-2 / CGMCC 5302) (Penicillium decumbens), this protein is opdI.